The chain runs to 212 residues: 3-oxo-tetronate 4-phosphate decarboxylase (212 aa).

E79 serves as the catalytic Proton acceptor. Zn(2+) is bound by residues E79, H98, and H100. Residue Y125 is the Proton donor of the active site. H165 provides a ligand contact to Zn(2+).

It belongs to the aldolase class II family. AraD/FucA subfamily. Zn(2+) serves as cofactor.

The catalysed reaction is 3-dehydro-4-O-phospho-D-erythronate + H(+) = dihydroxyacetone phosphate + CO2. It catalyses the reaction 3-dehydro-4-O-phospho-L-erythronate + H(+) = dihydroxyacetone phosphate + CO2. In terms of biological role, catalyzes the decarboxylation of 3-oxo-tetronate 4-phosphate to dihydroxyacetone phosphate (DHAP) and CO(2). The polypeptide is 3-oxo-tetronate 4-phosphate decarboxylase (Escherichia coli O6:H1 (strain CFT073 / ATCC 700928 / UPEC)).